The sequence spans 365 residues: Dehydroprecondylocarpine acetate synthase (365 aa).

Residues Cys-105, Cys-108, Cys-111, and Cys-119 each contribute to the Zn(2+) site. N-linked (GlcNAc...) asparagine glycosylation is found at Asn-142 and Asn-147. 12 residues coordinate NADP(+): Leu-194, Gly-196, Leu-197, Ser-216, Thr-217, Thr-218, Lys-221, Leu-279, Ala-281, Ser-303, Ala-305, and Arg-350.

Belongs to the zinc-containing alcohol dehydrogenase family. In terms of assembly, homodimer. Interaction with catharanthine synthase (CS) and tabersonine synthase (TS). The cofactor is Zn(2+).

The protein localises to the cytoplasm. Its subcellular location is the cytosol. It catalyses the reaction dihydroprecondylocarpine acetate + NADP(+) = precondylocarpine acetate + NADPH + H(+). It functions in the pathway alkaloid biosynthesis. In terms of biological role, component of the seco-iridoid and derivatives monoterpenoid indole alkaloids (MIAs, e.g. vinblastine, catharanthine, tabersonine, vincadifformine, vindoline, vincristine, quinine and strychnine) biosynthesis pathway. Catalyzes the non-canonical 1,4-reduction of an alpha,beta-unsaturated iminium moiety; by contrast with the classic alcohol dehydrogenase mechanism, this reaction does not require a catalytic zinc or proton relay. Converts precondylocarpine acetate to dihydroprecondylocarpine acetate, that is spontaneously converted into dehydrosecodine intermediate, precursor of angryline. May also trigger the non-stereoselective 1,4-reduction reaction at C15 of dehydrosecodine leading to the production of secodine, a precursor of vincadifformine. In Catharanthus roseus (Madagascar periwinkle), this protein is Dehydroprecondylocarpine acetate synthase.